A 201-amino-acid polypeptide reads, in one-letter code: LexA repressor (201 aa).

Residues 28-48 (MRDIAAHLRISGTLGVSKHLT) constitute a DNA-binding region (H-T-H motif). Active-site for autocatalytic cleavage activity residues include Ser-120 and Lys-157.

Belongs to the peptidase S24 family. Homodimer.

The enzyme catalyses Hydrolysis of Ala-|-Gly bond in repressor LexA.. Represses a number of genes involved in the response to DNA damage (SOS response), including recA and lexA. In the presence of single-stranded DNA, RecA interacts with LexA causing an autocatalytic cleavage which disrupts the DNA-binding part of LexA, leading to derepression of the SOS regulon and eventually DNA repair. This chain is LexA repressor, found in Geobacter metallireducens (strain ATCC 53774 / DSM 7210 / GS-15).